The sequence spans 465 residues: Mitochondrial F-box protein MFB1 (465 aa).

One can recognise an F-box domain in the interval 14–60; that stretch reads ERSLTNLPLNLLFRILSHLDMNDLQNIGKTCTLLRMLANENIVYRNA. The disordered stretch occupies residues 253-279; sequence FTKSRDPDYKEMTPTSTESSDSITRLR. Basic and acidic residues predominate over residues 254–263; the sequence is TKSRDPDYKE. Residues 265-275 are compositionally biased toward polar residues; that stretch reads TPTSTESSDSI.

It localises to the mitochondrion. The polypeptide is Mitochondrial F-box protein MFB1 (MFB1) (Saccharomyces cerevisiae (strain ATCC 204508 / S288c) (Baker's yeast)).